The primary structure comprises 129 residues: Large ribosomal subunit protein bL12 (129 aa).

Belongs to the bacterial ribosomal protein bL12 family. As to quaternary structure, homodimer. Part of the ribosomal stalk of the 50S ribosomal subunit. Forms a multimeric L10(L12)X complex, where L10 forms an elongated spine to which 2 to 4 L12 dimers bind in a sequential fashion. Binds GTP-bound translation factors.

In terms of biological role, forms part of the ribosomal stalk which helps the ribosome interact with GTP-bound translation factors. Is thus essential for accurate translation. The polypeptide is Large ribosomal subunit protein bL12 (Pseudothermotoga lettingae (strain ATCC BAA-301 / DSM 14385 / NBRC 107922 / TMO) (Thermotoga lettingae)).